We begin with the raw amino-acid sequence, 177 residues long: ATP synthase subunit delta (177 aa).

This sequence belongs to the ATPase delta chain family. In terms of assembly, F-type ATPases have 2 components, F(1) - the catalytic core - and F(0) - the membrane proton channel. F(1) has five subunits: alpha(3), beta(3), gamma(1), delta(1), epsilon(1). F(0) has three main subunits: a(1), b(2) and c(10-14). The alpha and beta chains form an alternating ring which encloses part of the gamma chain. F(1) is attached to F(0) by a central stalk formed by the gamma and epsilon chains, while a peripheral stalk is formed by the delta and b chains.

It is found in the cell inner membrane. In terms of biological role, f(1)F(0) ATP synthase produces ATP from ADP in the presence of a proton or sodium gradient. F-type ATPases consist of two structural domains, F(1) containing the extramembraneous catalytic core and F(0) containing the membrane proton channel, linked together by a central stalk and a peripheral stalk. During catalysis, ATP synthesis in the catalytic domain of F(1) is coupled via a rotary mechanism of the central stalk subunits to proton translocation. This protein is part of the stalk that links CF(0) to CF(1). It either transmits conformational changes from CF(0) to CF(1) or is implicated in proton conduction. The polypeptide is ATP synthase subunit delta (Haemophilus ducreyi (strain 35000HP / ATCC 700724)).